Consider the following 481-residue polypeptide: Cytochrome P450 monooygenase 2 (481 aa).

The helical transmembrane segment at 12-32 (GSQLLPFYIAIFVFTLVPWAI) threads the bilayer. Residue C418 participates in heme binding.

This sequence belongs to the cytochrome P450 family. Requires heme as cofactor.

The protein localises to the membrane. The protein operates within plant hormone biosynthesis; gibberellin biosynthesis. Its function is as follows. Gibberellin 20-oxidase; part of the gene cluster that mediates the biosynthesis of gibberellins (GAs), diterpenoids that may provide a selective advantage during infection of the preferred host plant, rice. Gibberellins (GAs) are diterpenoids and are synthesized via the mevalonate pathway. Biosynthesis of the major metabolite GA3 (gibberellic acid) from geranylgeranyl diphosphate (GGPP) requires 13 steps. The GGPP produced by the geranylgeranyl diphosphate synthase GGS2 is converted to ent-kaurene via ent-copalyldiphosphate in a two-step cyclization reaction performed by the bifunctional ent-copalyl diphosphate synthase/ent-kaurene synthase enzyme (CPS/KS). Ent-Kaurene is metabolized to GAs by a series of oxidation reactions catalyzed by cytochrome P450 monooxygenases. Cytochrome P450 monooxygenase P450-4 is an ent-kaurene oxidase that catalyzes the three oxidation steps between ent-kaurene and ent-kaurenoic acid. The highly multifunctional cytochrome P450 monooxygenase P450-1 then catalyzes four steps involving oxidation at two carbon atoms, in the main pathway from ent-kaurenoic acid to GA14 via GA12-aldehyde as well as producing kaurenolides and fujenoic acids as by-products. The cytochrome P450 monooxygenase P450-2 then converts GA14 to GA4 by removal of C-20. GA4 is further converted to GA7 by the GA4 desaturase DES via 1,2-desaturation before cytochrome P450 monooxygenase P450-3, a 13-hydroxylase, hydroxylates GA7 to GA3, the final product of the GA-biosynthetic pathway. This is Cytochrome P450 monooygenase 2 from Gibberella fujikuroi (strain CBS 195.34 / IMI 58289 / NRRL A-6831) (Bakanae and foot rot disease fungus).